The chain runs to 194 residues: 7-methyl-GTP pyrophosphatase (194 aa).

The active-site Proton acceptor is the D70.

The protein belongs to the Maf family. YceF subfamily. The cofactor is a divalent metal cation.

The protein resides in the cytoplasm. The catalysed reaction is N(7)-methyl-GTP + H2O = N(7)-methyl-GMP + diphosphate + H(+). Nucleoside triphosphate pyrophosphatase that hydrolyzes 7-methyl-GTP (m(7)GTP). May have a dual role in cell division arrest and in preventing the incorporation of modified nucleotides into cellular nucleic acids. The protein is 7-methyl-GTP pyrophosphatase of Ralstonia nicotianae (strain ATCC BAA-1114 / GMI1000) (Ralstonia solanacearum).